Here is a 333-residue protein sequence, read N- to C-terminus: Ketol-acid reductoisomerase (NADP(+)) (333 aa).

The 181-residue stretch at methionine 1 to threonine 181 folds into the KARI N-terminal Rossmann domain. NADP(+)-binding positions include tyrosine 24 to glutamine 27, arginine 47, and aspartate 82 to glutamine 85. Histidine 107 is a catalytic residue. Position 133 (glycine 133) interacts with NADP(+). In terms of domain architecture, KARI C-terminal knotted spans threonine 182–leucine 327. The Mg(2+) site is built by aspartate 190, glutamate 194, glutamate 226, and glutamate 230. Serine 251 serves as a coordination point for substrate.

This sequence belongs to the ketol-acid reductoisomerase family. The cofactor is Mg(2+).

It carries out the reaction (2R)-2,3-dihydroxy-3-methylbutanoate + NADP(+) = (2S)-2-acetolactate + NADPH + H(+). The enzyme catalyses (2R,3R)-2,3-dihydroxy-3-methylpentanoate + NADP(+) = (S)-2-ethyl-2-hydroxy-3-oxobutanoate + NADPH + H(+). Its pathway is amino-acid biosynthesis; L-isoleucine biosynthesis; L-isoleucine from 2-oxobutanoate: step 2/4. It functions in the pathway amino-acid biosynthesis; L-valine biosynthesis; L-valine from pyruvate: step 2/4. In terms of biological role, involved in the biosynthesis of branched-chain amino acids (BCAA). Catalyzes an alkyl-migration followed by a ketol-acid reduction of (S)-2-acetolactate (S2AL) to yield (R)-2,3-dihydroxy-isovalerate. In the isomerase reaction, S2AL is rearranged via a Mg-dependent methyl migration to produce 3-hydroxy-3-methyl-2-ketobutyrate (HMKB). In the reductase reaction, this 2-ketoacid undergoes a metal-dependent reduction by NADPH to yield (R)-2,3-dihydroxy-isovalerate. The sequence is that of Ketol-acid reductoisomerase (NADP(+)) from Desulfovibrio desulfuricans (strain ATCC 27774 / DSM 6949 / MB).